The following is a 248-amino-acid chain: PF03932 family protein CutC (248 aa).

The protein belongs to the CutC family.

The protein localises to the cytoplasm. The polypeptide is PF03932 family protein CutC (Citrobacter koseri (strain ATCC BAA-895 / CDC 4225-83 / SGSC4696)).